Reading from the N-terminus, the 355-residue chain is Phenylalanine--tRNA ligase alpha subunit (355 aa).

Mg(2+) is bound at residue Glu-273.

The protein belongs to the class-II aminoacyl-tRNA synthetase family. Phe-tRNA synthetase alpha subunit type 1 subfamily. Tetramer of two alpha and two beta subunits. Requires Mg(2+) as cofactor.

It localises to the cytoplasm. The catalysed reaction is tRNA(Phe) + L-phenylalanine + ATP = L-phenylalanyl-tRNA(Phe) + AMP + diphosphate + H(+). The sequence is that of Phenylalanine--tRNA ligase alpha subunit from Bifidobacterium animalis subsp. lactis (strain AD011).